A 67-amino-acid chain; its full sequence is Potassium channel toxin alpha-KTx 6.16 (67 aa).

The N-terminal stretch at 1 to 24 (MNLKLALVLLLTVINVGMLPGATS) is a signal peptide. Intrachain disulfides connect C34-C55, C40-C60, C44-C62, and C50-C65.

It belongs to the short scorpion toxin superfamily. Potassium channel inhibitor family. Alpha-KTx 06 subfamily. As to expression, expressed by the venom gland.

It is found in the secreted. In terms of biological role, inhibits voltage-gated potassium channels. This is Potassium channel toxin alpha-KTx 6.16 from Opisthacanthus cayaporum (South American scorpion).